Here is a 106-residue protein sequence, read N- to C-terminus: uncharacterized protein (106 aa).

Disordered regions lie at residues 33–64 and 87–106; these read FKTS…SRND and NLTG…AVSK. Basic and acidic residues predominate over residues 52 to 63; the sequence is DGKKQESLESRN. Over residues 87-99 the composition is skewed to polar residues; sequence NLTGLESGGSSPP.

The protein resides in the mitochondrion. This is an uncharacterized protein from Arabidopsis thaliana (Mouse-ear cress).